The chain runs to 592 residues: Transducer of Cdc42-dependent actin assembly protein 1 homolog (592 aa).

The 265-residue stretch at 3–267 folds into the F-BAR domain; the sequence is DSCSWDQLWD…DIGLIDPSRD (265 aa). Disordered stretches follow at residues 343–366 and 447–519; these read FGGGTADKKTDSGDYGTLPPQQRA and SATS…DELY. One can recognise an REM-1 domain in the interval 359-436; sequence TLPPQQRARK…IQKFKILLDD (78 aa). The stretch at 363–441 forms a coiled coil; the sequence is QQRARKIAGK…ILLDDVNAQL (79 aa). A compositionally biased stretch (polar residues) spans 447-457; it reads SATSVGGSDTP. A compositionally biased stretch (low complexity) spans 459 to 474; that stretch reads SIRSVSSASSGVTSRV. The segment covering 495–510 has biased composition (polar residues); it reads FSGSNGGSDTDPTING. The 63-residue stretch at 527-589 folds into the SH3 domain; sequence PVLGEAIAQF…PSSYLKVTWF (63 aa).

The protein belongs to the FNBP1 family. As to quaternary structure, interacts (via SH3 domain) with wsp-1. Interacts with cdc-42 and (via SH3 domain) with wve-1. Expressed in the germline and specifically in the gonads.

The protein resides in the cell junction. Its subcellular location is the apical cell membrane. It is found in the basolateral cell membrane. It localises to the cytoplasmic vesicle. The protein localises to the cytoplasm. The protein resides in the perinuclear region. Its subcellular location is the recycling endosome. Its function is as follows. Plays a role in protein trafficking, actin organization and embryonic morphogenesis. Potentially acts as a cdc-42 effector. May play a role in hypodermal P-cell nuclear positioning. Together with toca-2, is required for protein trafficking regulating yolk protein clathrin-mediated endocytosis by oocytes during oogenesis and retrograde recycling and the sorting of recycling endosome cargo proteins such as mig-14. Also, together with toca-2, controls the distribution of actin at cell junctions. In Caenorhabditis elegans, this protein is Transducer of Cdc42-dependent actin assembly protein 1 homolog.